Reading from the N-terminus, the 699-residue chain is Elongation factor G (699 aa).

Residues 8–283 (EHIRNIGICA…AVVDFLPSPI (276 aa)) enclose the tr-type G domain. Residues 17–24 (AHIDAGKT), 81–85 (DTPGH), and 135–138 (NKMD) each bind GTP.

Belongs to the TRAFAC class translation factor GTPase superfamily. Classic translation factor GTPase family. EF-G/EF-2 subfamily.

The protein resides in the cytoplasm. Its function is as follows. Catalyzes the GTP-dependent ribosomal translocation step during translation elongation. During this step, the ribosome changes from the pre-translocational (PRE) to the post-translocational (POST) state as the newly formed A-site-bound peptidyl-tRNA and P-site-bound deacylated tRNA move to the P and E sites, respectively. Catalyzes the coordinated movement of the two tRNA molecules, the mRNA and conformational changes in the ribosome. This Rickettsia peacockii (strain Rustic) protein is Elongation factor G.